Consider the following 154-residue polypeptide: Movement protein (154 aa).

2 disordered regions span residues 83–103 and 123–154; these read SSPT…HTRP and WVAT…GRVR.

It belongs to the luteoviruses movement protein family.

Its function is as follows. Transports viral genome to neighboring plant cells directly through plasmosdesmata, without any budding. The movement protein allows efficient cell to cell propagation, by bypassing the host cell wall barrier. In Barley yellow dwarf virus (isolate MAV) (BYDV), this protein is Movement protein.